A 3926-amino-acid chain; its full sequence is MGAPNSTREPIAIVGTACRFPGGANTPSKLWDLLCEKRDVQTRIPPERFNPDAFYHRNGEKSGCTDVKKAYLLTEDIRAFDASFFKINPREAEAMDPQQRLLLETVYEATEAAGLPYEDLKGSNTAVYVGSMTGDYHEMLLRDPQDMPKYMATGTARSILSNRVSYFFDWKGPSMTIDTACSSSLVAVHEAVTALRLGVSNIACAAGTNLILGPEMMISESKLHMLSPTGRSKMWDASANGYARGEGTAAIMMKTLSQALSDGDHVYGIIRETGVNSDGHTNGITLPSSESQKTLIRQTYANAGLDLIKERCQFFEAHGTGTPAGDPIEARAIHEAFFEDAAGSSDQMFVGSVKTAIGHLEGCAGLAGLIKALEAVRRGVIPPNQLFENLNPALKPFAGNLSIPTETLPWPEVAPGTPRRASVNSFGFGGTNAHAIIESFDNTPQPAPTGGIISYPLVLSANSEKSLRRQISQLHDTLQNAGEGEVQDTLYTLAQRRSQLPARTYFSGHTQEELLKKLSAASAEDATITVASQEVTNQNSRILGVFTGQGAQWPTMGREILKSSAFAGDLITRLETSLASLQEPPTWTLSEQILADPESSRLGEAAVSQPVCTAVQLMLVELLRQAGITFSTVIGHSSGEIAAAYAAGFLTPEDAIRIAYCRGVCAKLAGGEEGQKGSMMAVGLSYEEAACFCEDHFPGCIDVAASNAPSSATLSGDKDAILEAKALLDEQGTFARVLKVDTAYHSRHMQPCAEPYMALLRESNIQLLPGDDSCEWFSSVIGERMSSFTHGQLLTGEYWVENMVKPVLFTLASELAADSKLPCHVALEVGPHPALKGPFSQTYKRATGSQLPYQGALTRNVHDVEALSDALGFIWARLGKSAVNFASHAELFSVSKTSFSTNLPSYPWDHSQSFWKESRKSANFRQRTSPPHPLLGTRSTEDATQDLRWLNILHLDDAPWLEGHKVEGLVVYPAAAYLVMAMESAKSIDETKTIQLVELFDVQILSAIQLSQDSQGVETLFTLEIDDVNSTAATARWSLFTSMVGRGSNWKCNAKGHLRVDFGSEAQDSLLPSRDPPVASLTSVNIERFYTSLAEIGLGYTGAFKHLATVQRQSGFATAKASQMNTDFSAMIHPALLDSAFQSLFAAYCWPDDGSLAAPFVPTFFKSLRIVSLDHIENGQELTIDSYLTDTNDREITADLDIFTSDSEKPLLQLQGLTCTSLLRPGPSNAKELYTQTKWEVDISCAVASLDVQQHDAAEDLDLVDLCERLSYYYLRELNRKVDRSEVPAMDWHFQRIFEWIDYLFPIIEAGKHTTIRKEWSADEGSWLLEQASKFPGQVDLLLIRAVGENLTEVVRKETTMLEHMVRNDVLNRFYKFGLGFQRANGYLSRISKQIAHRYPQMKILEIGAGTGGATKGILESLGTTFESYTFTDISTGFFEAAAEAFEPWVSKIIFKPLNVENDPVEQGFLEAQYDFIVASNVLHATKSLSTTMRNVRRLLKPGGQLLLLEVTSDIVRVRLMMSGLSGWWLGGDDGRRYAPTITVPEWDSLLRSTGFSGVDHTVNDFYDPSKYMTSVMLSQAVDDHHVDILRKPLNSALGWLPQRCITIIGGKNNEIAQQVSKTLLSMKSASLDLINHVDSFEQLASTPELPLRAVLILEDLDEPVLKSLTSEKLAGLQRTINDSRQILWVSKGCQKDEPYANMSTGLCRSLASEYPHIQLQHIDMETGLDSLAVSRIVEALIRIVYKASLKQDDDLLWSHEAELILEDEGRWLIPRILPDDKLNDHLNAGKMKVKTNASLADTPVEIQQAGSQWVISQTVPSLPISDNTDHIRIKASYSTLHAVRVRGSRVYLSYGHRVTGSTTPVIAFSETAGSIISVPESQVFDVPQGFDIDQSASLRSLVLTAIVESVLAECDHGAAIIVHEADNYLGAAFETKCREIGLKLVRTTSKSDHKDDAIFIHPLAPERVVKKALPHVEVAVVVDLSGRDYSVVDSPLRRHVPSTTKFLELSDLIGSVTCGLRDVNIQCVQDAIESSFKSPSDGPVVNISEVSGLQASETSYATVVDWSIEKPVSVQVQPLQANRLLRSDRTYLLAGCTGGLGKALCRWMVAAGVRHLALTTRNVEAIDKVWLEGLQLQGADVRLFQVDVGDKAALERAHAQVTAEMPPICGVANAAMVLSDRSFGELKVGDFDKVFGPKVRGTQNLHELFQDEPLDFFIMFSSLASVVGNRGQANYAAANLFMTAVAEQRRAKNLAASVIHIGMILGVGYVSSTGAYEATLRQYNYMPISEPDFLNMFSEAILVGQPGSSHAPELITGLNRYSLQEDAPKFFWHENMRFSHHTLEEQHQESTSTTKASISQRLAQVQTPAEMLEVVEEEFCTKLERMLQAESGTIKVSQPLMSLGVDSLIAAEIRSWFFKELDVDMPVLEILNTASVAEICSTAVASLATLAPQEQTETTTLVTSEAVQSLNAVSGNGSSSSRAPTEFNSSTLKSGAQSTQGTSVSGDKDTNSVDGSAKVERNGPLSFAQERIWFLQQYLQDATTFNVTMAYRITGPLRVNDLESAFQKVIQRHESLRTGFHMDPETTVPTQIVYEQSPFGLEQRNDSDITKEFEELQNTHYDLENGRVLKAIVLTKPDTDEHILLVGFHHIALDGFSAQILVRDLAIAYAGGNLAPLDKGYLDFAVDQRAAVYPAETLQYWKTEFETLPPALPVFDFAETKTRLPLTDYKTRVSERTLQPDVAGKAKSAARALAATPFHVYLAALQVLLSDFASTQDVCIGITDANKNDAAHMDTIGFFVNLLPLRFQLSASQTLAELVSNTKAKANGALTHSRLPFDVLLDELKIPRSTSHSPLFQVVLNFKMGSTQKVPLADCQAEVIDFKDVNNPYDLAFDIETYPDGSTSISVKSQEYLYTKNELDLILESYINLLSLFEKDSSKTLGEVSQCTPDEAQKTLTLGRGERIPSPSFDTLSHYFEDWVKRQPDAIAIRDDQGTTLSYSQLKSFVNNIAATLEKSGLTPGARVGVYCEPSIFIIASLLAIAEVGGVYVPLDPQNPIKRLQLIVDDCEPEILLFDESTKELAPKLQTNASLINIYNVRRLPSSAAITNRAQGAGMAYMFYTSGTTGVPKGVALTHANLVHHIDSITHFYDIKRGTMLQQAPLGFDMSLTQMSLSTMLGGTLVVASSEARKDPLQLAKLMLSERVTHTFMTPTLAVALIHHGYEYLVKCVGWEFSLLSGEAFRTHVISEFQRLGLPQLKLFNGYGPTEITINSSSGLNELDLAAPRDTRNPTIGFTLPNYSCYILDEDLKPVRPGHAGELFVGGAGIAVGYLRRDELNKERFLSDPFASSEDVARGWARMYRTGDKAKFLPDGRIVFLGRIAGDSQIKLRGFRIELEDIANTIVKSSGGVVSEAAVSFRQGVNGPDDGAFLVAFAIISQAHRPENPSSFLKQLLKDLSLPRYMIPAKIVQVEHLPMGPTGKLDQNALDVMPIPQDENVHEETLTTTQERLRALWFESLPAVAPDAFIGSETDFFEAGGNSLRIVMLREHIAREFGVMVSVFDLFQASTLGGMAAKIDGSTGADNQPIIWEEETRVDIPSGLETPDEPAILDGDELEVALTGATGFLGLAILRSLLKDERISRVHCLAVRSPSKARDEVFKSPRVVVYHGDLSSPRLGLSEDEFGTLSKKFDIIIHNGAEVSFLKSYQALKKANVSSTKELAQLASGRQIPFHFVSTGGVVNLTDHDGLPEISVSGFKPPIDGTEGYAASKWASEVILESHAERAHLPVWIHRPANVTGAAAPATDLMGSILQYSTTMQSLPEISNWKGSFDFVPVEQVADEIAASIHESRSSEPVYRHHCGDQKISVSELSAHLEAGIGAKMEIIGVDDWLARARSTGIDETTALLVEKMLSGENGGTVPWLRKGE.

The 432-residue stretch at 8–439 (REPIAIVGTA…GTNAHAIIES (432 aa)) folds into the Ketosynthase family 3 (KS3) domain. Residues Cys-181, His-318, and His-359 each act as for beta-ketoacyl synthase activity in the active site. A malonyl-CoA:ACP transacylase (MAT) domain region spans residues 545–863 (VFTGQGAQWP…QGALTRNVHD (319 aa)). Residues 932 to 1065 (HPLLGTRSTE…GHLRVDFGSE (134 aa)) are N-terminal hotdog fold. Residues 932-1225 (HPLLGTRSTE…GLTCTSLLRP (294 aa)) form a dehydratase (DH) domain region. The PKS/mFAS DH domain maps to 932–1228 (HPLLGTRSTE…CTSLLRPGPS (297 aa)). Catalysis depends on His-964, which acts as the Proton acceptor; for dehydratase activity. The C-terminal hotdog fold stretch occupies residues 1081–1228 (LTSVNIERFY…CTSLLRPGPS (148 aa)). Asp-1138 (proton donor; for dehydratase activity) is an active-site residue. The C-methyltransferase (CMeT) domain stretch occupies residues 1344-1572 (IRAVGENLTE…VNDFYDPSKY (229 aa)). Residues 2091 to 2265 (TYLLAGCTGG…AASVIHIGMI (175 aa)) are ketoreductase (KR) domain 1. The Carrier 1 domain occupies 2371 to 2448 (EMLEVVEEEF…EICSTAVASL (78 aa)). O-(pantetheine 4'-phosphoryl)serine is present on Ser-2408. A compositionally biased stretch (polar residues) spans 2474–2506 (VSGNGSSSSRAPTEFNSSTLKSGAQSTQGTSVS). The disordered stretch occupies residues 2474–2518 (VSGNGSSSSRAPTEFNSSTLKSGAQSTQGTSVSGDKDTNSVDGSA). Residues 2507 to 2518 (GDKDTNSVDGSA) are compositionally biased toward basic and acidic residues. The condensation stretch occupies residues 2525-2810 (PLSFAQERIW…VNLLPLRFQL (286 aa)). The segment at 2979–3389 (DWVKRQPDAI…RIAGDSQIKL (411 aa)) is adenylation. A Carrier 2 domain is found at 3501 to 3580 (ETLTTTQERL…GMAAKIDGST (80 aa)). An O-(pantetheine 4'-phosphoryl)serine modification is found at Ser-3540. A thiolester reductase (TE) domain region spans residues 3619-3840 (LTGATGFLGL…DFVPVEQVAD (222 aa)).

The protein in the C-terminal section; belongs to the NRP synthetase family.

Its pathway is mycotoxin biosynthesis. Its function is as follows. Hybrid PKS-NRPS synthetase; part of the gene cluster that mediates the biosynthesis of the mycotoxin lucilactaene and the lucilactaene-related compound NG-391 that act as cell cycle inhibitors with potent growth inhibitory activity against malarial parasites, moderate growth inhibitory activity against cancer cells, and no activity against bacteria and fungi. The hybrid PKS-NRPS synthetase LUC5 is responsible for the condensation of one acetyl-coenzyme A (CoA) unit with six malonyl-CoA units and the amide linkage of the arising heptaketide and homoserine, subsequently releasing the first intermediate prelucilactaene B, as an alcohol with an open ring structure. Lucilactaene and NG-391 lack the 7-methyl group present in fusarins which is inserted in fusarins by the C-methyltransferase (CMeT) domain of the fusarin synthetase FUS1, suggesting that the CMet domain of LUC5 does not methylate this position. Within the pathway, both the cytochrome P450 monooxygenase LUC2 and the hydrolase LUC6 function in parallel in modification of prelucilactaene B. LUC6 may catalyze the 2-pyrrolidone ring formation to form prelucilactaene C from prelucilactaene B, followed by C-15 hydroxylation by the same enzyme to give prelucilactaene D, which is then converted to prelucilactaene E by epoxidation, and finally to prelucilactaene F by cyclization. Prelucilactane D, prelucilactaene E, and prelucilactaene F can be converted to dihydrolucilactaene, NG391, and lucilactaene, respectively, via C-20 methyl group hydroxylation by the cytochrome P450 monooxygenase LUC2. However, LUC2, unlike FUS8 in fusarin C biosynthesis, is not enough for the full oxidation of the C-20 methyl group into carboxylic acid, which is a prerequisite for the final methylation step. The aldehyde dehydrogenase LUC3 is involved in the biosynthesis by further oxidation of the C-20 alcoholic analog prelucilactaene G into a carboxylic derivative. This unidentified carboxylic derivative may be converted to demethyllucilactaene. As the last step, the methyltransferase LUC1 methylates the hydroxyl group at C-21 of demethyllucilactaene to generate lucilactaene. This Fusarium sp protein is Hybrid PKS-NRPS synthetase LUC5.